Reading from the N-terminus, the 403-residue chain is 26S proteasome regulatory subunit 8 (403 aa).

186–193 (GPPGTGKT) lines the ATP pocket.

This sequence belongs to the AAA ATPase family.

It is found in the cytoplasm. The protein localises to the nucleus. Functionally, the 26S proteasome is involved in the ATP-dependent degradation of ubiquitinated proteins. The regulatory (or ATPase) complex confers ATP dependency and substrate specificity to the 26S complex. The protein is 26S proteasome regulatory subunit 8 (psmC5) of Dictyostelium discoideum (Social amoeba).